The following is a 330-amino-acid chain: Elongation factor Ts (330 aa).

The interval 79 to 82 is involved in Mg(2+) ion dislocation from EF-Tu; the sequence is TDFV.

It belongs to the EF-Ts family.

The protein resides in the cytoplasm. Its function is as follows. Associates with the EF-Tu.GDP complex and induces the exchange of GDP to GTP. It remains bound to the aminoacyl-tRNA.EF-Tu.GTP complex up to the GTP hydrolysis stage on the ribosome. The chain is Elongation factor Ts from Bacteroides fragilis (strain ATCC 25285 / DSM 2151 / CCUG 4856 / JCM 11019 / LMG 10263 / NCTC 9343 / Onslow / VPI 2553 / EN-2).